We begin with the raw amino-acid sequence, 364 residues long: Peptide chain release factor 2 (364 aa).

Q251 carries the post-translational modification N5-methylglutamine.

Belongs to the prokaryotic/mitochondrial release factor family. Post-translationally, methylated by PrmC. Methylation increases the termination efficiency of RF2.

The protein localises to the cytoplasm. Functionally, peptide chain release factor 2 directs the termination of translation in response to the peptide chain termination codons UGA and UAA. The protein is Peptide chain release factor 2 (prfB) of Buchnera aphidicola subsp. Schizaphis graminum (strain Sg).